The primary structure comprises 277 residues: uncharacterized protein (277 aa).

4 helical membrane passes run 37–59 (YLRY…LYIW), 63–82 (LIFG…PKVI), 214–236 (MLCG…KTYI), and 246–268 (WITS…TYLF).

It localises to the cell membrane. This is an uncharacterized protein from Bacillus anthracis.